The chain runs to 83 residues: U-actitoxin-Aeq6a (83 aa).

An N-terminal signal peptide occupies residues 1–20; the sequence is MIYKAVFVCLVLVLLGDVFC. The propeptide occupies 21 to 36; that stretch reads SPRNSGGGTLNDNPFE. The residue at position 82 (Pro-82) is a Proline amide.

Post-translationally, contains 3 disulfide bonds. As to expression, expressed by acrorhagi.

The protein localises to the secreted. It is found in the nematocyst. Toxin. This is U-actitoxin-Aeq6a from Actinia equina (Beadlet anemone).